The sequence spans 391 residues: Terminal nucleotidyltransferase 5C (391 aa).

It belongs to the TENT family. In terms of assembly, interacts with BCCIP and PABPC1; the interaction has no effect on TENT5C poly(A) polymerase function. Interacts with PLK4; this interaction leads to the TENT5C recruitment into the centrosome.

The protein resides in the nucleus. The protein localises to the cytoplasm. It localises to the cytoskeleton. It is found in the microtubule organizing center. Its subcellular location is the centrosome. It catalyses the reaction RNA(n) + ATP = RNA(n)-3'-adenine ribonucleotide + diphosphate. In terms of biological role, catalyzes the transfer of one adenosine molecule from an ATP to an mRNA poly(A) tail bearing a 3'-OH terminal group and enhances mRNA stability and gene expression. Can also elongate RNA oligos ending with uridine molecule, provided that the sequence is adenosine-rich. Mainly targets mRNAs encoding endoplasmic reticulum-targeted protein. This Rattus norvegicus (Rat) protein is Terminal nucleotidyltransferase 5C.